The chain runs to 97 residues: Eclosion hormone (97 aa).

Positions 1 to 17 (MNCKPLILCTFVAVAMC) are cleaved as a signal peptide. 3 disulfide bridges follow: cysteine 48/cysteine 72, cysteine 52/cysteine 68, and cysteine 55/cysteine 83.

This sequence belongs to the insect eclosion hormone family. In terms of tissue distribution, expressed in a single pair of brain neurons which extend their processes the entire length of the central nervous system and also to the corpora cardiaca portion of the ring gland. These cells show massive depletion of immunoreactive Eh at ecdysis.

It localises to the secreted. Neuropeptide that triggers the performance of ecdysis behaviors at the end of a molt. It triggers adult behavior patterns: larval, pupal and adult ecdysis, and plasticization during the molt. This Drosophila melanogaster (Fruit fly) protein is Eclosion hormone (Eh).